A 311-amino-acid chain; its full sequence is HPr kinase/phosphorylase (311 aa).

Catalysis depends on residues H139 and K160. 154–161 (GKSGIGKS) is an ATP binding site. S161 is a binding site for Mg(2+). The active-site Proton acceptor; for phosphorylation activity. Proton donor; for dephosphorylation activity is the D178. Residues 201–210 (MEIRGLGIIN) are important for the catalytic mechanism of both phosphorylation and dephosphorylation. E202 serves as a coordination point for Mg(2+). R245 is a catalytic residue. The tract at residues 266–271 (PISSGR) is important for the catalytic mechanism of dephosphorylation.

The protein belongs to the HPrK/P family. As to quaternary structure, homohexamer. It depends on Mg(2+) as a cofactor.

The enzyme catalyses [HPr protein]-L-serine + ATP = [HPr protein]-O-phospho-L-serine + ADP + H(+). The catalysed reaction is [HPr protein]-O-phospho-L-serine + phosphate + H(+) = [HPr protein]-L-serine + diphosphate. Catalyzes the ATP- as well as the pyrophosphate-dependent phosphorylation of a specific serine residue in HPr, a phosphocarrier protein of the phosphoenolpyruvate-dependent sugar phosphotransferase system (PTS). HprK/P also catalyzes the pyrophosphate-producing, inorganic phosphate-dependent dephosphorylation (phosphorolysis) of seryl-phosphorylated HPr (P-Ser-HPr). The protein is HPr kinase/phosphorylase (hprK) of Mycoplasma genitalium (strain ATCC 33530 / DSM 19775 / NCTC 10195 / G37) (Mycoplasmoides genitalium).